The sequence spans 512 residues: Cytochrome P450 monooxygenase adrA (512 aa).

Residues F12 to A32 form a helical membrane-spanning segment. 3 N-linked (GlcNAc...) asparagine glycosylation sites follow: N86, N149, and N210. C453 lines the heme pocket.

This sequence belongs to the cytochrome P450 family. Heme is required as a cofactor.

Its subcellular location is the membrane. The protein operates within secondary metabolite biosynthesis; terpenoid biosynthesis. Functionally, cytochrome P450 monooxygenase; part of the gene cluster that mediates the biosynthesis of andrastins, meroterpenoid compounds that exhibit inhibitory activity against ras farnesyltransferase, suggesting that they could be promising leads for antitumor agents. The first step of the pathway is the synthesis of 3,5-dimethylorsellinic acid (DMOA) by the polyketide synthase adrD via condensation of one acetyl-CoA starter unit with 3 malonyl-CoA units and 2 methylations. DMAO is then converted to farnesyl-DMAO by the prenyltransferase adrG. The methyltransferase adrK catalyzes the methylation of the carboxyl group of farnesyl-DMAO to farnesyl-DMAO methyl ester which is further converted to epoxyfarnesyl-DMAO methyl ester by the FAD-dependent monooxygenase adrH. The terpene cyclase adrI then catalyzes the carbon skeletal rearrangement to generate the andrastin E, the first compound in the pathway having the andrastin scaffold, with the tetracyclic ring system. The post-cyclization tailoring enzymes adrF, adrE, adrJ, and adrA, are involved in the conversion of andrastin E into andrastin A. The short chain dehydrogenase adrF is responsible for the oxidation of the C-3 a hydroxyl group of andrastin E to yield the corresponding ketone, andrastin D. The ketoreductase adrE stereoselectively reduces the carbonyl moiety to reverse the stereochemistry of the C-3 position to yield andrastin F. The acetyltransferase adrJ is the acetyltransferase that attaches the acetyl group to the C-3 hydroxyl group of andrastin F to yield andrastin C. Finally, the cytochrome P450 monooxygenase adrA catalyzes two sequential oxidation reactions of the C-23 methyl group, to generate the corresponding alcohol andrastin B, and aldehyde andrastin A. This is Cytochrome P450 monooxygenase adrA from Penicillium rubens (strain ATCC 28089 / DSM 1075 / NRRL 1951 / Wisconsin 54-1255) (Penicillium chrysogenum).